The chain runs to 107 residues: UPF0145 protein BVU_2335 (107 aa).

This sequence belongs to the UPF0145 family.

The sequence is that of UPF0145 protein BVU_2335 from Phocaeicola vulgatus (strain ATCC 8482 / DSM 1447 / JCM 5826 / CCUG 4940 / NBRC 14291 / NCTC 11154) (Bacteroides vulgatus).